A 338-amino-acid polypeptide reads, in one-letter code: m7GpppX diphosphatase (338 aa).

Residues 1–36 (MADTAPQLKRKREQEAEEAETPSTEEKEAGVGNGTS) form a disordered region. N-acetylalanine is present on alanine 2. Positions 9 to 12 (KRKR) match the nuclear localization signal (NLS) motif. A phosphoserine mark is found at serine 23 and serine 100. 2 positions are modified to N6-acetyllysine: lysine 137 and lysine 141. A nuclear export sequence (NES) motif is present at residues 141 to 153 (KYMRQDLRLIRET). Residues tryptophan 174, glutamate 184, aspartate 204, lysine 206, and 267–278 (HYLPSYYHLHVH) contribute to the substrate site. Positions 274–278 (HLHVH) match the Histidine triad motif motif. Histidine 276 serves as the catalytic Nucleophile.

The protein belongs to the HIT family. Homodimer. Associates with components of the exosome multienzyme ribonuclease complex, such as EXOSC3 and EXOSC4. Interacts with NDOR1.

It is found in the cytoplasm. The protein localises to the nucleus. The enzyme catalyses a 5'-end (N(7)-methyl 5'-triphosphoguanosine)-ribonucleoside in mRNA + H2O = N(7)-methyl-GMP + a 5'-end diphospho-ribonucleoside in mRNA + 2 H(+). Its activity is regulated as follows. The hydrolytic product 7-methylguanosine diphosphate (m7GDP) efficiently inhibits the decapping scavenger activity and acts as a competitive inhibitor in vitro. Inhibited by 2,4-diaminoquinazoline. Decapping scavenger enzyme that catalyzes the cleavage of a residual cap structure following the degradation of mRNAs by the 3'-&gt;5' exosome-mediated mRNA decay pathway. Hydrolyzes cap analog structures like 7-methylguanosine nucleoside triphosphate (m7GpppG) with up to 10 nucleotide substrates (small capped oligoribonucleotides) and specifically releases 5'-phosphorylated RNA fragments and 7-methylguanosine monophosphate (m7GMP). Cleaves cap analog structures like tri-methyl guanosine nucleoside triphosphate (m3(2,2,7)GpppG) with very poor efficiency. Does not hydrolyze unmethylated cap analog (GpppG) and shows no decapping activity on intact m7GpppG-capped mRNA molecules longer than 25 nucleotides. Does not hydrolyze 7-methylguanosine diphosphate (m7GDP) to m7GMP. May also play a role in the 5'-&gt;3 mRNA decay pathway; m7GDP, the downstream product released by the 5'-&gt;3' mRNA mediated decapping activity, may be also converted by DCPS to m7GMP. Binds to m7GpppG and strongly to m7GDP. Plays a role in first intron splicing of pre-mRNAs. Inhibits activation-induced cell death. In Mus musculus (Mouse), this protein is m7GpppX diphosphatase (Dcps).